The sequence spans 152 residues: Sulfur-rich protein (152 aa).

Positions 1-11 are enriched in polar residues; it reads MSTTPIVSGVT. The segment at 1-21 is disordered; sequence MSTTPIVSGVTSQNNSSENVS. The span at 12–21 shows a compositional bias: low complexity; the sequence is SQNNSSENVS. Transmembrane regions (helical) follow at residues 44–64 and 73–93; these read VGLA…LFIL and IYLA…ILSM.

The protein localises to the membrane. This chain is Sulfur-rich protein (srp), found in Chlamydia muridarum (strain MoPn / Nigg).